The primary structure comprises 111 residues: BET1-like protein (111 aa).

Topologically, residues methionine 1 to lysine 86 are cytoplasmic. A phosphoserine mark is found at serine 9 and serine 37. One can recognise a t-SNARE coiled-coil homology domain in the interval glutamate 15–methionine 77. A helical; Anchor for type IV membrane protein transmembrane segment spans residues leucine 87–serine 107. Over arginine 108–threonine 111 the chain is Lumenal.

Component of a SNARE complex consisting of STX5, YKT6, GOSR1 and BET1L. Interacts with STX5.

The protein localises to the golgi apparatus membrane. Its subcellular location is the golgi apparatus. It localises to the trans-Golgi network membrane. Vesicle SNARE required for targeting and fusion of retrograde transport vesicles with the Golgi complex. Required for the integrity of the Golgi complex. This is BET1-like protein from Homo sapiens (Human).